The primary structure comprises 346 residues: D-alanine--D-alanine ligase (346 aa).

An ATP-grasp domain is found at 133 to 324 (KLYAQSVGVK…IVDNLAKNIE (192 aa)). 159–211 (LSFPCILKPARLGSSIGISIVKDESELKYAKDVAFEFDEDVVVEQFVSNIKEY) is a binding site for ATP. Mg(2+) is bound by residues Asp-284, Glu-296, and Asn-298.

It belongs to the D-alanine--D-alanine ligase family. Requires Mg(2+) as cofactor. Mn(2+) serves as cofactor.

It localises to the cytoplasm. It carries out the reaction 2 D-alanine + ATP = D-alanyl-D-alanine + ADP + phosphate + H(+). Its pathway is cell wall biogenesis; peptidoglycan biosynthesis. Functionally, cell wall formation. The chain is D-alanine--D-alanine ligase from Campylobacter lari (strain RM2100 / D67 / ATCC BAA-1060).